We begin with the raw amino-acid sequence, 421 residues long: Elongation factor 1-alpha (421 aa).

In terms of domain architecture, tr-type G spans 4–220 (NRHQNLAVIG…NGLPVPQPPT (217 aa)). A G1 region spans residues 13 to 20 (GHVDHGKS). 13–20 (GHVDHGKS) is a binding site for GTP. Ser-20 lines the Mg(2+) pocket. The G2 stretch occupies residues 69–73 (GVTID). Positions 90–93 (DCPG) are G3. Residues 90–94 (DCPGH) and 145–148 (NKMD) each bind GTP. Positions 145–148 (NKMD) are G4. The interval 184 to 186 (SAF) is G5.

The protein belongs to the TRAFAC class translation factor GTPase superfamily. Classic translation factor GTPase family. EF-Tu/EF-1A subfamily.

The protein localises to the cytoplasm. The enzyme catalyses GTP + H2O = GDP + phosphate + H(+). GTP hydrolase that promotes the GTP-dependent binding of aminoacyl-tRNA to the A-site of ribosomes during protein biosynthesis. The sequence is that of Elongation factor 1-alpha from Halobacterium salinarum (strain ATCC 700922 / JCM 11081 / NRC-1) (Halobacterium halobium).